A 117-amino-acid polypeptide reads, in one-letter code: Large ribosomal subunit protein bL17 (117 aa).

This sequence belongs to the bacterial ribosomal protein bL17 family. In terms of assembly, part of the 50S ribosomal subunit. Contacts protein L32.

The protein is Large ribosomal subunit protein bL17 of Neorickettsia sennetsu (strain ATCC VR-367 / Miyayama) (Ehrlichia sennetsu).